Reading from the N-terminus, the 153-residue chain is Selenoprotein F (153 aa).

The first 19 residues, 1–19, serve as a signal peptide directing secretion; it reads MAGEVYLLWLLPLLQGLAS. Residue selenocysteine 84 is a non-standard amino acid, selenocysteine.

The protein belongs to the selenoprotein M/F family. In terms of tissue distribution, higher levels in polster, prechordal plate, axis, otic vesicle and somites. Lower levels in fin buds.

The protein resides in the endoplasmic reticulum lumen. Functionally, may be involved in redox reactions associated with the formation of disulfide bonds. May contribute to the quality control of protein folding in the endoplasmic reticulum. This Danio rerio (Zebrafish) protein is Selenoprotein F.